A 476-amino-acid chain; its full sequence is MRVLHVCSELFPLLKTGGLADVIGALPAAQLAEGADVRIILPAFPDLRRGIPETVLVREIDTFAGRVALRYGHYRGIGIYLIDAPALYDRAGSPYHDASLYAYSDNYLRFALLGWMACELACGLDGYWRPEVVHAHDWHAGLTCAYLAARGRPARSVFTVHNLAYQGLFSADHLSELHLPAEFFQIYGLEFYGQISYLKAGLFFADHVTTVSPTYAKEITQPAFGYGMEGLLQALVRQGRLTGILNGVDSDIWDPQSDTLLPTRYDAENLQAKAINKTHLQTAMGLQLAENKPIFAVVSRLTVQKGLDLVLEALPELLALGGQLVVLGSGDATLQEAFLAAAAEHSGQVGVQIGYHEAFSHRIIAGSDVILVPSRFEPCGLTQLYGLKYGTLPLVRHTGGLADTVVDCALENLADGSASGFVFNECEAQALVKAIRRAFVLWSRPKHWRHVQRHAMRLDFGWQLAAVDYLSLYRRL.

Lys15 contributes to the ADP-alpha-D-glucose binding site.

It belongs to the glycosyltransferase 1 family. Bacterial/plant glycogen synthase subfamily.

It carries out the reaction [(1-&gt;4)-alpha-D-glucosyl](n) + ADP-alpha-D-glucose = [(1-&gt;4)-alpha-D-glucosyl](n+1) + ADP + H(+). It participates in glycan biosynthesis; glycogen biosynthesis. Its function is as follows. Synthesizes alpha-1,4-glucan chains using ADP-glucose. The polypeptide is Glycogen synthase (Yersinia pseudotuberculosis serotype IB (strain PB1/+)).